The following is a 139-amino-acid chain: Putative pre-16S rRNA nuclease (139 aa).

The protein belongs to the YqgF nuclease family.

The protein resides in the cytoplasm. Functionally, could be a nuclease involved in processing of the 5'-end of pre-16S rRNA. In Legionella pneumophila (strain Paris), this protein is Putative pre-16S rRNA nuclease.